Reading from the N-terminus, the 574-residue chain is Adenine deaminase (574 aa).

It belongs to the metallo-dependent hydrolases superfamily. Adenine deaminase family. Mn(2+) is required as a cofactor.

The enzyme catalyses adenine + H2O + H(+) = hypoxanthine + NH4(+). This Thermosipho africanus (strain TCF52B) protein is Adenine deaminase.